An 868-amino-acid chain; its full sequence is mRNA-capping enzyme (868 aa).

The active-site N6-GMP-lysine intermediate is K282. The region spanning 594–868 is the mRNA cap 0 methyltransferase domain; the sequence is GIYRAQTALI…LFGFICLRKN (275 aa). Residues K607, G624, D646, and 710 to 712 contribute to the S-adenosyl-L-methionine site; that span reads LFI.

It in the N-terminal section; belongs to the dsDNA virus mRNA guanylyltransferase family. This sequence in the C-terminal section; belongs to the class I-like SAM-binding methyltransferase superfamily. mRNA cap 0 methyltransferase family. In terms of assembly, part of the viral DNA-directed RNA polymerase that consists of 8 polII-like subunits (RPB1, RPB2, RPB3, RPB5, RPB6, RPB7, RPB9, RPB10), a capping enzyme and a termination factor.

It is found in the virion. It catalyses the reaction a 5'-end triphospho-ribonucleoside in mRNA + H2O = a 5'-end diphospho-ribonucleoside in mRNA + phosphate + H(+). It carries out the reaction a 5'-end diphospho-ribonucleoside in mRNA + GTP + H(+) = a 5'-end (5'-triphosphoguanosine)-ribonucleoside in mRNA + diphosphate. The enzyme catalyses a 5'-end (5'-triphosphoguanosine)-ribonucleoside in mRNA + S-adenosyl-L-methionine = a 5'-end (N(7)-methyl 5'-triphosphoguanosine)-ribonucleoside in mRNA + S-adenosyl-L-homocysteine. It functions in the pathway mRNA processing; mRNA capping. Probably catalyzes the second reaction in the mRNA cap formation pathway. Forms a covalent complex with GTP. The chain is mRNA-capping enzyme from African swine fever virus (isolate Tick/South Africa/Pretoriuskop Pr4/1996) (ASFV).